A 115-amino-acid polypeptide reads, in one-letter code: Large ribosomal subunit protein uL18 (115 aa).

Belongs to the universal ribosomal protein uL18 family. As to quaternary structure, part of the 50S ribosomal subunit; part of the 5S rRNA/L5/L18/L25 subcomplex. Contacts the 5S and 23S rRNAs.

This is one of the proteins that bind and probably mediate the attachment of the 5S RNA into the large ribosomal subunit, where it forms part of the central protuberance. In Baumannia cicadellinicola subsp. Homalodisca coagulata, this protein is Large ribosomal subunit protein uL18.